We begin with the raw amino-acid sequence, 558 residues long: Trehalase 1 (558 aa).

It belongs to the glycosyl hydrolase 15 family.

It catalyses the reaction alpha,alpha-trehalose + H2O = alpha-D-glucose + beta-D-glucose. It functions in the pathway glycan degradation; trehalose degradation; D-glucose from alpha,alpha-trehalose: step 1/1. Functionally, catalyzes the hydrolysis of alpha,alpha-trehalose into two molecules of D-glucose. The chain is Trehalase 1 (treH1) from Sulfolobus acidocaldarius (strain ATCC 33909 / DSM 639 / JCM 8929 / NBRC 15157 / NCIMB 11770).